A 768-amino-acid polypeptide reads, in one-letter code: P-selectin (768 aa).

Residues 1–41 (MAGCPKGSWTPRLRSVILGGAQLIWFSALISELVNQKEVAA) form the signal peptide. The Extracellular portion of the chain corresponds to 42–709 (WTYNYSTKAY…QAGTLTIQEA (668 aa)). The region spanning 58-158 (VFCRRHFTDL…PCFKRKRALC (101 aa)) is the C-type lectin domain. 21 disulfide bridges follow: cysteine 60–cysteine 158, cysteine 131–cysteine 150, cysteine 163–cysteine 174, cysteine 168–cysteine 183, cysteine 185–cysteine 194, cysteine 200–cysteine 244, cysteine 230–cysteine 257, cysteine 262–cysteine 306, cysteine 292–cysteine 319, cysteine 324–cysteine 368, cysteine 354–cysteine 381, cysteine 386–cysteine 430, cysteine 416–cysteine 443, cysteine 448–cysteine 492, cysteine 478–cysteine 505, cysteine 510–cysteine 554, cysteine 540–cysteine 567, cysteine 580–cysteine 624, cysteine 610–cysteine 637, cysteine 642–cysteine 686, and cysteine 672–cysteine 699. Residues glutamate 121, asparagine 123, and asparagine 124 each coordinate Ca(2+). Asparagine 123 is a binding site for a carbohydrate. Residues glutamate 133 and asparagine 146 each contribute to the a carbohydrate site. Asparagine 146 and aspartate 147 together coordinate Ca(2+). In terms of domain architecture, EGF-like spans 159-195 (YTASCQDMSCSNQGECIETIGSYTCSCYPGFYGPECE). 8 consecutive Sushi domains span residues 198 to 259 (KECG…KCDA), 260 to 321 (VQCQ…TCEA), 322 to 383 (IACE…FCEA), 384 to 445 (LQCP…ECQA), 446 to 507 (VSCA…TCEA), 508 to 569 (IKCP…TCKG), 578 to 639 (VRCP…MCRA), and 640 to 701 (VKCS…TCQA). Asparagine 398 carries an N-linked (GlcNAc...) asparagine glycan. N-linked (GlcNAc...) asparagine glycosylation is present at asparagine 603. 3 N-linked (GlcNAc...) asparagine glycosylation sites follow: asparagine 654, asparagine 661, and asparagine 679. A helical membrane pass occupies residues 710 to 733 (LTYLGGAVASTTGLAVGGTLLALL). Residues 734-768 (RKRLRKKDDGKCPLNPHSHLGTYGVFTNAAYDPTP) lie on the Cytoplasmic side of the membrane. Cysteine 745 is lipidated: S-palmitoyl cysteine; alternate. Cysteine 745 carries the S-stearoyl cysteine; alternate lipid modification. The Endocytosis signal signature appears at 756 to 759 (YGVF). Positions 759-768 (FTNAAYDPTP) are interaction with SNX17.

The protein belongs to the selectin/LECAM family. As to quaternary structure, interacts with SNX17. Interacts with SELPLG/PSGL1 and PODXL2 and mediates neutrophil adhesion and leukocyte rolling. This interaction requires the sialyl-Lewis X epitope of SELPLG and PODXL2, and specific tyrosine sulfation on SELPLG. Interacts (via C-type lectin domain) with alpha-IIb/beta3 integrin ITGA2B:ITGB3 and alpha-V/beta-3 integrin ITGAV:ITGB3. Interacts with alpha5/beta1 integrin ITGA5:ITGB1 and alpha4/beta1 integrin ITGA4:ITGB. Stored in the alpha-granules of platelets and Weibel-Palade bodies of endothelial cells. Upon cell activation by agonists, P-selectin is transported rapidly to the cell surface.

It is found in the cell membrane. In terms of biological role, ca(2+)-dependent receptor for myeloid cells that binds to carbohydrates on neutrophils and monocytes. Mediates the interaction of activated endothelial cells or platelets with leukocytes. The ligand recognized is sialyl-Lewis X. Mediates rapid rolling of leukocyte rolling over vascular surfaces during the initial steps in inflammation through interaction with SELPLG. Mediates cell-cell interactions and cell adhesion via the interaction with integrin alpha-IIb/beta3 (ITGA2B:ITGB3) and integrin alpha-V/beta-3 (ITGAV:ITGB3). The polypeptide is P-selectin (Selp) (Mus musculus (Mouse)).